A 441-amino-acid polypeptide reads, in one-letter code: Chromosome partition protein MukF (441 aa).

The interval 208 to 236 is leucine-zipper; that stretch reads LTETSSTLRELQDTLEAAGDKLQTSLLSI.

Belongs to the MukF family. In terms of assembly, interacts, and probably forms a ternary complex, with MukE and MukB via its C-terminal region. The complex formation is stimulated by calcium or magnesium. It is required for an interaction between MukE and MukB.

The protein resides in the cytoplasm. The protein localises to the nucleoid. Involved in chromosome condensation, segregation and cell cycle progression. May participate in facilitating chromosome segregation by condensation DNA from both sides of a centrally located replisome during cell division. Not required for mini-F plasmid partitioning. Probably acts via its interaction with MukB and MukE. Overexpression results in anucleate cells. It has a calcium binding activity. This Pectobacterium atrosepticum (strain SCRI 1043 / ATCC BAA-672) (Erwinia carotovora subsp. atroseptica) protein is Chromosome partition protein MukF.